The primary structure comprises 364 residues: Fructose-bisphosphate aldolase A (364 aa).

Y5 bears the Phosphotyrosine mark. A Phosphothreonine modification is found at T9. S36 and S39 each carry phosphoserine. K42 bears the N6-acetyllysine; alternate mark. K42 is covalently cross-linked (Glycyl lysine isopeptide (Lys-Gly) (interchain with G-Cter in SUMO1); alternate). K42 is covalently cross-linked (Glycyl lysine isopeptide (Lys-Gly) (interchain with G-Cter in SUMO2); alternate). R43 is a beta-D-fructose 1,6-bisphosphate binding site. S46 carries the post-translational modification Phosphoserine. K99 bears the N6-(2-hydroxyisobutyryl)lysine mark. Position 108 is an N6-acetyllysine (K108). N6-acetyllysine; alternate is present on K111. K111 is modified (N6-malonyllysine; alternate). S132 is modified (phosphoserine). K147 is subject to N6-(2-hydroxyisobutyryl)lysine. Catalysis depends on E188, which acts as the Proton acceptor. The active-site Schiff-base intermediate with dihydroxyacetone-P is K230. S272 is modified (phosphoserine). Beta-D-fructose 1,6-bisphosphate contacts are provided by residues 272–274 (SGG), S301, and R304. Residue K312 is modified to N6-malonyllysine. N6-acetyllysine is present on K330.

The protein belongs to the class I fructose-bisphosphate aldolase family. As to quaternary structure, homotetramer. Interacts with SNX9 and WAS. Interacts with FBP2; the interaction blocks FBP2 inhibition by physiological concentrations of AMP and reduces inhibition by Ca(2+).

It localises to the cytoplasm. The protein resides in the myofibril. The protein localises to the sarcomere. It is found in the i band. Its subcellular location is the m line. The catalysed reaction is beta-D-fructose 1,6-bisphosphate = D-glyceraldehyde 3-phosphate + dihydroxyacetone phosphate. It functions in the pathway carbohydrate degradation; glycolysis; D-glyceraldehyde 3-phosphate and glycerone phosphate from D-glucose: step 4/4. Functionally, catalyzes the reversible conversion of beta-D-fructose 1,6-bisphosphate (FBP) into two triose phosphate and plays a key role in glycolysis and gluconeogenesis. In addition, may also function as scaffolding protein. This Mus musculus (Mouse) protein is Fructose-bisphosphate aldolase A (Aldoa).